A 346-amino-acid chain; its full sequence is 4-hydroxy-2-oxohexanoate aldolase (346 aa).

One can recognise a Pyruvate carboxyltransferase domain in the interval 7–259; the sequence is VRITDTSLRD…KTGIDFFDIA (253 aa). 15 to 16 provides a ligand contact to substrate; it reads RD. Residue Asp16 participates in Mn(2+) binding. The active-site Proton acceptor is His19. 2 residues coordinate substrate: Ser169 and His198. Residues His198 and His200 each coordinate Mn(2+). Position 289 (Tyr289) interacts with substrate.

The protein belongs to the 4-hydroxy-2-oxovalerate aldolase family. In terms of assembly, homodimer. Forms a heterotetramer composed of two aldolase (HsaF) and two dehydrogenase (HsaG) subunits. It depends on Mn(2+) as a cofactor.

The enzyme catalyses (S)-4-hydroxy-2-oxohexanoate = propanal + pyruvate. It carries out the reaction (S)-4-hydroxy-2-oxopentanoate = acetaldehyde + pyruvate. In terms of biological role, involved in cholesterol degradation. Catalyzes the retro-aldol cleavage of 4-hydroxy-2-oxohexanoate (HOHA) to pyruvate and propanal. Can also catalyze the cleavage of 4-hydroxy-2-oxopentanoate (HOPA) to pyruvate and acetaldehyde. The aldehydes produced by this reaction are directly channeled to the dehydrogenase HsaG. This chain is 4-hydroxy-2-oxohexanoate aldolase, found in Mycobacterium bovis (strain ATCC BAA-935 / AF2122/97).